An 803-amino-acid polypeptide reads, in one-letter code: Phenylalanine--tRNA ligase beta subunit (803 aa).

The tRNA-binding domain occupies 39–152 (TPGFQKVVAG…PDASPGADAA (114 aa)). Positions 406–480 (RQPVTIELRP…RLYGYNRIPV (75 aa)) constitute a B5 domain. The Mg(2+) site is built by Asp-458, Asp-464, Glu-467, and Glu-468. In terms of domain architecture, FDX-ACB spans 709–802 (PRFPAVERDL…LEERLGASLR (94 aa)).

This sequence belongs to the phenylalanyl-tRNA synthetase beta subunit family. Type 1 subfamily. In terms of assembly, tetramer of two alpha and two beta subunits. It depends on Mg(2+) as a cofactor.

The protein localises to the cytoplasm. It catalyses the reaction tRNA(Phe) + L-phenylalanine + ATP = L-phenylalanyl-tRNA(Phe) + AMP + diphosphate + H(+). This Moorella thermoacetica (strain ATCC 39073 / JCM 9320) protein is Phenylalanine--tRNA ligase beta subunit.